We begin with the raw amino-acid sequence, 124 residues long: uncharacterized protein (124 aa).

The next 3 helical transmembrane spans lie at 14–34, 41–61, and 85–105; these read KAIV…YGWQ, FSYG…IIFY, and MVFI…AFFV.

The protein resides in the cell membrane. This is an uncharacterized protein from Haemophilus influenzae (strain ATCC 51907 / DSM 11121 / KW20 / Rd).